The primary structure comprises 266 residues: Isopentenyl phosphate kinase (266 aa).

ATP is bound at residue 5 to 9 (KLGGS). Alanine 47 serves as a coordination point for substrate. Glycine 48 is an ATP binding site. 2 residues coordinate substrate: histidine 52 and glycine 157. ATP-binding positions include aspartate 178, 183–188 (YTRNPK), glycine 219, and lysine 223.

It belongs to the isopentenyl phosphate kinase family. In terms of assembly, homodimer.

It carries out the reaction isopentenyl phosphate + ATP = isopentenyl diphosphate + ADP. Catalyzes the formation of isopentenyl diphosphate (IPP), the building block of all isoprenoids. Has lower activity with dimethylallyl phosphate (DMAP) and isopentenyl thiolophosphate (ISP). Has low activity with 1-butyl phosphate (BP) and 3-buten-1-yl phosphate (BEP). Has no significant activity with geranyl phosphate (in vitro). This is Isopentenyl phosphate kinase from Methanothermobacter thermautotrophicus (strain ATCC 29096 / DSM 1053 / JCM 10044 / NBRC 100330 / Delta H) (Methanobacterium thermoautotrophicum).